A 528-amino-acid chain; its full sequence is Sodium-dependent lysophosphatidylcholine symporter 1 (528 aa).

At 1-37 (MAGGGGAERVRVGAAAAGLLPPSCRQPRRRESRERLS) the chain is on the cytoplasmic side. A helical transmembrane segment spans residues 38–66 (VCSKLCYAVGGAPYQTTGCALGFFLQIYL). Topologically, residues 67-73 (LDVAQLD) are extracellular. The chain crosses the membrane as a helical span at residues 74 to 99 (PFYASIILFVGRAWDAITDPMVGFFI). Residues 100–109 (SKTPWTRFGR) lie on the Cytoplasmic side of the membrane. The helical transmembrane segment at 110-129 (LMPWIIFSTPFAVISYFLIW) threads the bilayer. The Extracellular portion of the chain corresponds to 130–138 (FVPDISTGQ). The helical transmembrane segment at 139–161 (VMWYLIFYCIFQTLVTCFHVPYS) threads the bilayer. Residues 162 to 176 (ALTMFISREQSERDS) are Cytoplasmic-facing. The chain crosses the membrane as a helical span at residues 177–199 (ATAYRMTVEVLGTVLGTAIQGQI). At 200-241 (VGKAVTPCIENPPFLSETNFSVAIRNVNMTHYTGSLADTRNA) the chain is on the extracellular side. Cysteine 207 and cysteine 460 are joined by a disulfide. 2 N-linked (GlcNAc...) asparagine glycosylation sites follow: asparagine 218 and asparagine 227. Residues 242–263 (YMVAAGVIGGLYILCAVILSVG) traverse the membrane as a helical segment. The Cytoplasmic segment spans residues 264–295 (VREKRESSELQSDEPVSFFRGLKLVMNHGAYI). A helical membrane pass occupies residues 296–319 (KLITGFLFTSLAFMLLEGNFALFC). The Extracellular portion of the chain corresponds to 320 to 328 (TYTLGFRNE). A helical membrane pass occupies residues 329-351 (FQNILLAIMLSATLTIPFWQWFL). Topologically, residues 352–355 (TRFG) are cytoplasmic. A helical membrane pass occupies residues 356–376 (KKTAVYVGISSAVPFLITVVV). Topologically, residues 377-381 (LDSNL) are extracellular. The helical transmembrane segment at 382 to 404 (VVTYIVAVAAGISVAAAFLLPWS) threads the bilayer. Topologically, residues 405 to 427 (MLPDVIDDFKLQHPESRGHEAIF) are cytoplasmic. A helical transmembrane segment spans residues 428-450 (FSFYVFFTKFTSGVSLGISTLSL). Residues 451-467 (DFAGYQTRGCSQPSEVN) are Extracellular-facing. A helical transmembrane segment spans residues 468–490 (ITLKLLVSAVPVGLILLGLLLFK). Topologically, residues 491–528 (LYPIDEEKRRENKKALQDLREESNSSSESDSTELANIV) are cytoplasmic. Residues 503-513 (KKALQDLREES) show a composition bias toward basic and acidic residues. Residues 503 to 528 (KKALQDLREESNSSSESDSTELANIV) form a disordered region. A compositionally biased stretch (low complexity) spans 514–528 (NSSSESDSTELANIV).

Belongs to the major facilitator superfamily.

The protein localises to the cell membrane. The protein resides in the endoplasmic reticulum membrane. It catalyses the reaction a 1-acyl-sn-glycero-3-phosphocholine(in) + Na(+)(in) = a 1-acyl-sn-glycero-3-phosphocholine(out) + Na(+)(out). The enzyme catalyses 1-(4Z,7Z,10Z,13Z,16Z,19Z-docosahexaenoyl)-sn-glycero-3-phosphocholine(in) + Na(+)(in) = 1-(4Z,7Z,10Z,13Z,16Z,19Z-docosahexaenoyl)-sn-glycero-3-phosphocholine(out) + Na(+)(out). It carries out the reaction 1-(9Z-octadecenoyl)-sn-glycero-3-phosphocholine(in) + Na(+)(in) = 1-(9Z-octadecenoyl)-sn-glycero-3-phosphocholine(out) + Na(+)(out). The catalysed reaction is 1-hexadecanoyl-sn-glycero-3-phosphocholine(in) + Na(+)(in) = 1-hexadecanoyl-sn-glycero-3-phosphocholine(out) + Na(+)(out). It catalyses the reaction a 1-acyl-sn-glycero-3-phosphoethanolamine(in) + Na(+)(in) = a 1-acyl-sn-glycero-3-phosphoethanolamine(out) + Na(+)(out). Functionally, sodium-dependent lysophosphatidylcholine (LPC) symporter, which plays an essential role for blood-brain barrier formation and function. Specifically expressed in endothelium of the blood-brain barrier of micro-vessels and transports LPC into the brain. Transport of LPC is essential because it constitutes the major mechanism by which docosahexaenoic acid (DHA), an omega-3 fatty acid that is essential for normal brain growth and cognitive function, enters the brain. Transports LPC carrying long-chain fatty acids such LPC oleate and LPC palmitate with a minimum acyl chain length of 14 carbons. Does not transport docosahexaenoic acid in unesterified fatty acid. The polypeptide is Sodium-dependent lysophosphatidylcholine symporter 1 (Gallus gallus (Chicken)).